The chain runs to 407 residues: tRNA(Ile2) 2-agmatinylcytidine synthetase TiaS (407 aa).

It belongs to the TiaS family.

It is found in the cytoplasm. It catalyses the reaction cytidine(34) in tRNA(Ile2) + agmatine + ATP + H2O = 2-agmatinylcytidine(34) in tRNA(Ile2) + AMP + 2 phosphate + 2 H(+). ATP-dependent agmatine transferase that catalyzes the formation of 2-agmatinylcytidine (agm2C) at the wobble position (C34) of tRNA(Ile2), converting the codon specificity from AUG to AUA. This chain is tRNA(Ile2) 2-agmatinylcytidine synthetase TiaS, found in Caldivirga maquilingensis (strain ATCC 700844 / DSM 13496 / JCM 10307 / IC-167).